The primary structure comprises 460 residues: V-type ATP synthase beta chain (460 aa).

This sequence belongs to the ATPase alpha/beta chains family.

In terms of biological role, produces ATP from ADP in the presence of a proton gradient across the membrane. The V-type beta chain is a regulatory subunit. The chain is V-type ATP synthase beta chain from Clostridium novyi (strain NT).